A 239-amino-acid chain; its full sequence is BURP domain-containing protein 6 (239 aa).

An N-terminal signal peptide occupies residues 1–19 (MPGAIRDLINPVSSAASAS). One can recognise a BURP domain in the interval 28-239 (FFLEKDLFPG…PQDDMLWVRN (212 aa)).

As to expression, expressed in leaves and shoot.

In Oryza sativa subsp. japonica (Rice), this protein is BURP domain-containing protein 6 (BURP6).